A 37-amino-acid polypeptide reads, in one-letter code: Large ribosomal subunit protein bL36B (37 aa).

It belongs to the bacterial ribosomal protein bL36 family.

The protein is Large ribosomal subunit protein bL36B of Saccharopolyspora erythraea (strain ATCC 11635 / DSM 40517 / JCM 4748 / NBRC 13426 / NCIMB 8594 / NRRL 2338).